Reading from the N-terminus, the 121-residue chain is Large ribosomal subunit protein uL18 (121 aa).

Belongs to the universal ribosomal protein uL18 family. In terms of assembly, part of the 50S ribosomal subunit; part of the 5S rRNA/L5/L18/L25 subcomplex. Contacts the 5S and 23S rRNAs.

In terms of biological role, this is one of the proteins that bind and probably mediate the attachment of the 5S RNA into the large ribosomal subunit, where it forms part of the central protuberance. This Ehrlichia canis (strain Jake) protein is Large ribosomal subunit protein uL18.